A 518-amino-acid polypeptide reads, in one-letter code: 2-isopropylmalate synthase (518 aa).

Residues 24–275 (VYIFDTTLRD…KTNIKTQKLY (252 aa)) enclose the Pyruvate carboxyltransferase domain. 4 residues coordinate a divalent metal cation: aspartate 33, histidine 213, histidine 215, and asparagine 249.

It belongs to the alpha-IPM synthase/homocitrate synthase family. Homodimer. It depends on a divalent metal cation as a cofactor.

The enzyme catalyses 3-methyl-2-oxobutanoate + acetyl-CoA + H2O = (2S)-2-isopropylmalate + CoA + H(+). It participates in amino-acid biosynthesis; L-leucine biosynthesis; L-leucine from 3-methyl-2-oxobutanoate: step 1/4. Its function is as follows. Catalyzes the condensation of the acetyl group of acetyl-CoA with 3-methyl-2-oxobutanoate (2-oxoisovalerate) to form 3-carboxy-3-hydroxy-4-methylpentanoate (2-isopropylmalate). The chain is 2-isopropylmalate synthase (leuA) from Methanocaldococcus jannaschii (strain ATCC 43067 / DSM 2661 / JAL-1 / JCM 10045 / NBRC 100440) (Methanococcus jannaschii).